The sequence spans 176 residues: Variant surface antigen A (176 aa).

A signal peptide spans 1 to 29 (MKKSIFSKKLLVSFGSLVALAAIPLIAIS). The N-palmitoyl cysteine moiety is linked to residue C30. Residue C30 is the site of S-diacylglycerol cysteine attachment. Residues 33-176 (TDNNSSQSQQ…TKTENTQHTS (144 aa)) are disordered. Residues 35–121 (NNSSQSQQPG…GSNSESGMNS (87 aa)) show a composition bias toward low complexity. Repeat 1 spans residues 123 to 135 (KTENTQQSEAPGT). Residues 123–176 (KTENTQQSEAPGTNTGNKTTSESNSESGMNSEKTENTQQSEAPGTKTENTQHTS) form a 2.5 X 13 AA repeats region. A compositionally biased stretch (polar residues) spans 126–142 (NTQQSEAPGTNTGNKTT). Positions 143–153 (SESNSESGMNS) are enriched in low complexity. Repeat 2 spans residues 155–167 (KTENTQQSEAPGT). Polar residues predominate over residues 158 to 176 (NTQQSEAPGTKTENTQHTS). One copy of the 3; truncated repeat lies at 168 to 176 (KTENTQHTS).

Its subcellular location is the cell membrane. Its function is as follows. Responsible for the antigenic diversity for host adaptation. The protein is Variant surface antigen A (vlpA) of Mesomycoplasma hyorhinis (Mycoplasma hyorhinis).